The sequence spans 219 residues: MKIGSGEKLLFIGDSITDCGRARPEGEGSFGALGTGYVAYVVGLLQAVYPELGIRVVNKGISGNTVRDLKARWEEDVIAQKPDWVSIMIGINDVWRQYDLPFMKEKHVYLDEYEATLRSLVLETKPLVKGIILMTPFYIEGNEQDPMRRTMDQYGRVVKQIAEETNSLFVDTQAAFNEVLKTLYPAALAWDRVHPSVAGHMILARAFLREIGFEWVRSR.

Ser-15 serves as the catalytic Nucleophile. Catalysis depends on charge relay system residues Asp-191 and His-194.

The protein belongs to the 'GDSL' lipolytic enzyme family. Homooctamer, presenting a unique donut-shaped quaternary structure built of two staggered tetrameric rings. The eight active sites are organized in four closely situated pairs, which face the relatively wide internal cavity.

Its subcellular location is the cytoplasm. It carries out the reaction Deacetylation of xylans and xylo-oligosaccharides.. It participates in glycan degradation; xylan degradation. Acetylxylan esterase involved in the degradation of xylan, a major structural heterogeneous polysaccharide found in plant biomass representing the second most abundant polysaccharide in the biosphere, after cellulose. Cleaves acetyl side groups from the xylose backbone units of the hemicellulolytic polymer xylan and xylo-oligosaccharides. Hydrolyzes about 20%-30% of the available acetyl groups on fully acetylated birch wood xylan. Completely deacetylates xylobiose peracetate (fully acetylated), and is active on both the alpha- and beta-forms of the sugar. Also hydrolyzes fully acetylated methyl-beta-D-xylopyranoside and methyl-beta-D-glucopyranoside, and the synthetic substrates 2-naphthyl acetate, 4-nitrophenyl acetate, 4-methylumbelliferyl acetate, and phenyl acetate. In Geobacillus stearothermophilus (Bacillus stearothermophilus), this protein is Acetylxylan esterase.